Consider the following 335-residue polypeptide: Methionine import ATP-binding protein MetN 1 (335 aa).

The ABC transporter domain occupies 2-242 (IEFQQVHKTY…PQHPTTKRFV (241 aa)). ATP is bound at residue 38 to 45 (GHSGAGKS).

The protein belongs to the ABC transporter superfamily. Methionine importer (TC 3.A.1.24) family. As to quaternary structure, the complex is composed of two ATP-binding proteins (MetN), two transmembrane proteins (MetI) and a solute-binding protein (MetQ).

Its subcellular location is the cell inner membrane. The enzyme catalyses L-methionine(out) + ATP + H2O = L-methionine(in) + ADP + phosphate + H(+). It carries out the reaction D-methionine(out) + ATP + H2O = D-methionine(in) + ADP + phosphate + H(+). Its function is as follows. Part of the ABC transporter complex MetNIQ involved in methionine import. Responsible for energy coupling to the transport system. The sequence is that of Methionine import ATP-binding protein MetN 1 from Pseudomonas putida (strain ATCC 47054 / DSM 6125 / CFBP 8728 / NCIMB 11950 / KT2440).